Consider the following 220-residue polypeptide: Ribosomal RNA small subunit methyltransferase G (220 aa).

Residues G82, L87, 137–138, and R152 contribute to the S-adenosyl-L-methionine site; that span reads VE.

The protein belongs to the methyltransferase superfamily. RNA methyltransferase RsmG family.

Its subcellular location is the cytoplasm. It catalyses the reaction guanosine(527) in 16S rRNA + S-adenosyl-L-methionine = N(7)-methylguanosine(527) in 16S rRNA + S-adenosyl-L-homocysteine. Specifically methylates the N7 position of guanine in position 527 of 16S rRNA. The sequence is that of Ribosomal RNA small subunit methyltransferase G from Janthinobacterium sp. (strain Marseille) (Minibacterium massiliensis).